Consider the following 579-residue polypeptide: Putative ABC transporter ATP-binding protein VPA1482 (579 aa).

ABC transporter domains are found at residues 3-244 and 299-533; these read IEFS…GIRE and LEVR…ANLT. ATP-binding positions include 37–44 and 332–339; these read GPSGSGKS and GKNGSGKS.

This sequence belongs to the ABC transporter superfamily.

The protein resides in the cell inner membrane. In terms of biological role, probably part of an ABC transporter complex. Responsible for energy coupling to the transport system. This chain is Putative ABC transporter ATP-binding protein VPA1482, found in Vibrio parahaemolyticus serotype O3:K6 (strain RIMD 2210633).